Consider the following 311-residue polypeptide: Fructose-1,6-bisphosphatase class 1 (311 aa).

Residues Glu-90, Asp-110, Leu-112, and Asp-113 each contribute to the Mg(2+) site. Residues Asp-113 to Ser-116, Tyr-221, and Lys-251 contribute to the substrate site. Glu-257 lines the Mg(2+) pocket.

Belongs to the FBPase class 1 family. In terms of assembly, homotetramer. Mg(2+) serves as cofactor.

The protein localises to the cytoplasm. The catalysed reaction is beta-D-fructose 1,6-bisphosphate + H2O = beta-D-fructose 6-phosphate + phosphate. It functions in the pathway carbohydrate biosynthesis; gluconeogenesis. The polypeptide is Fructose-1,6-bisphosphatase class 1 (Methanospirillum hungatei JF-1 (strain ATCC 27890 / DSM 864 / NBRC 100397 / JF-1)).